A 126-amino-acid chain; its full sequence is MRHRKSGRQLNRNSSHRKAMFSNMASSLVRHEVIKTTVPKAKELRRVIEPLITLAKTDSVANRRLAFARTRDNEVVAKLFNELGPRFAARQGGYTRILKCGFRTGDKAPMAYIELVDRPAAEEAAE.

This sequence belongs to the bacterial ribosomal protein bL17 family. In terms of assembly, part of the 50S ribosomal subunit. Contacts protein L32.

This chain is Large ribosomal subunit protein bL17, found in Vibrio atlanticus (strain LGP32) (Vibrio splendidus (strain Mel32)).